A 253-amino-acid chain; its full sequence is Probable transcriptional regulatory protein syc0529_d (253 aa).

This sequence belongs to the TACO1 family.

The protein localises to the cytoplasm. The sequence is that of Probable transcriptional regulatory protein syc0529_d from Synechococcus sp. (strain ATCC 27144 / PCC 6301 / SAUG 1402/1) (Anacystis nidulans).